A 148-amino-acid polypeptide reads, in one-letter code: Low molecular weight protein-tyrosine-phosphatase Etp (148 aa).

Cys-13 serves as the catalytic Nucleophile. Residue Arg-19 is part of the active site. Asp-119 (proton donor) is an active-site residue.

Belongs to the low molecular weight phosphotyrosine protein phosphatase family.

It catalyses the reaction O-phospho-L-tyrosyl-[protein] + H2O = L-tyrosyl-[protein] + phosphate. In terms of biological role, dephosphorylates etk. The polypeptide is Low molecular weight protein-tyrosine-phosphatase Etp (etp) (Escherichia coli O157:H7).